The chain runs to 362 residues: MSSGLTLPVWVAAAAKASLHALLGQPFAAQASVSLPDRPAPLLVPVISAARLDGGEQALAISRCDPGPGLDLTRDLEIWVRVSWTPDKQAGLTLLAGAGVGTRGAGGDLCVSAYARDLLERNLLPLDRGLTVEVVLPKGRELALRTSNAAFGVVDGLALIGTQAEVQRSAAPDQLKQVLLDLAQLTGDPEFRGDLILVIGENGLDLARQAQLAPLLKVGNWLGPVLVAAAEAGVQNLLLLGYHGKLIKLAGGIFHTHHHLADGRLEVLTALGFDAGLSLQQLRLLRHAQSVEQAFKALAAVNPAMAEQLGQQLALAVEQRSQAYVARYGDWPMRIGAVLFDRNRHLRWRGPVAGERFFTLMD.

Belongs to the CbiD family.

The catalysed reaction is Co-precorrin-5B + S-adenosyl-L-methionine = Co-precorrin-6A + S-adenosyl-L-homocysteine. It functions in the pathway cofactor biosynthesis; adenosylcobalamin biosynthesis; cob(II)yrinate a,c-diamide from sirohydrochlorin (anaerobic route): step 6/10. Its function is as follows. Catalyzes the methylation of C-1 in cobalt-precorrin-5B to form cobalt-precorrin-6A. The polypeptide is Cobalt-precorrin-5B C(1)-methyltransferase (Synechococcus sp. (strain CC9902)).